Reading from the N-terminus, the 132-residue chain is UPF0299 membrane protein YohJ (132 aa).

Helical transmembrane passes span 7-27 (IIWQ…AGIF), 31-51 (LLPV…VLLA), 63-83 (GCYV…VGVM), and 93-113 (FGPV…VMSW).

It belongs to the UPF0299 family.

The protein resides in the cell inner membrane. The sequence is that of UPF0299 membrane protein YohJ from Shigella dysenteriae serotype 1 (strain Sd197).